The primary structure comprises 449 residues: Glucose-6-phosphate isomerase (449 aa).

E291 acts as the Proton donor in catalysis. Residues H312 and K426 contribute to the active site.

The protein belongs to the GPI family.

It is found in the cytoplasm. The catalysed reaction is alpha-D-glucose 6-phosphate = beta-D-fructose 6-phosphate. It participates in carbohydrate biosynthesis; gluconeogenesis. Its pathway is carbohydrate degradation; glycolysis; D-glyceraldehyde 3-phosphate and glycerone phosphate from D-glucose: step 2/4. Its function is as follows. Catalyzes the reversible isomerization of glucose-6-phosphate to fructose-6-phosphate. The chain is Glucose-6-phosphate isomerase from Streptococcus pyogenes serotype M28 (strain MGAS6180).